A 358-amino-acid polypeptide reads, in one-letter code: tRNA-specific 2-thiouridylase MnmA (358 aa).

ATP-binding positions include 8-15 (AMSGGVDS) and M35. The interval 95–97 (NPD) is interaction with target base in tRNA. The active-site Nucleophile is C100. Cysteines 100 and 194 form a disulfide. Position 124 (G124) interacts with ATP. The tract at residues 144-146 (KDQ) is interaction with tRNA. The Cysteine persulfide intermediate role is filled by C194. The segment at 301–302 (RY) is interaction with tRNA.

It belongs to the MnmA/TRMU family.

Its subcellular location is the cytoplasm. The catalysed reaction is S-sulfanyl-L-cysteinyl-[protein] + uridine(34) in tRNA + AH2 + ATP = 2-thiouridine(34) in tRNA + L-cysteinyl-[protein] + A + AMP + diphosphate + H(+). In terms of biological role, catalyzes the 2-thiolation of uridine at the wobble position (U34) of tRNA, leading to the formation of s(2)U34. The protein is tRNA-specific 2-thiouridylase MnmA of Chlamydia trachomatis serovar L2 (strain ATCC VR-902B / DSM 19102 / 434/Bu).